A 193-amino-acid chain; its full sequence is Xanthine phosphoribosyltransferase (193 aa).

Residues Leu20 and Thr27 each contribute to the xanthine site. Residue 128–132 (ANGQA) coordinates 5-phospho-alpha-D-ribose 1-diphosphate. Position 156 (Lys156) interacts with xanthine.

It belongs to the purine/pyrimidine phosphoribosyltransferase family. Xpt subfamily. Homodimer.

Its subcellular location is the cytoplasm. The enzyme catalyses XMP + diphosphate = xanthine + 5-phospho-alpha-D-ribose 1-diphosphate. It functions in the pathway purine metabolism; XMP biosynthesis via salvage pathway; XMP from xanthine: step 1/1. In terms of biological role, converts the preformed base xanthine, a product of nucleic acid breakdown, to xanthosine 5'-monophosphate (XMP), so it can be reused for RNA or DNA synthesis. This is Xanthine phosphoribosyltransferase from Streptococcus pyogenes serotype M49 (strain NZ131).